Reading from the N-terminus, the 414-residue chain is Serine hydroxymethyltransferase (414 aa).

(6S)-5,6,7,8-tetrahydrofolate contacts are provided by residues leucine 121 and 125–127; that span reads GHL. At lysine 229 the chain carries N6-(pyridoxal phosphate)lysine.

The protein belongs to the SHMT family. As to quaternary structure, homodimer. Pyridoxal 5'-phosphate is required as a cofactor.

The protein localises to the cytoplasm. The enzyme catalyses (6R)-5,10-methylene-5,6,7,8-tetrahydrofolate + glycine + H2O = (6S)-5,6,7,8-tetrahydrofolate + L-serine. Its pathway is one-carbon metabolism; tetrahydrofolate interconversion. It participates in amino-acid biosynthesis; glycine biosynthesis; glycine from L-serine: step 1/1. Functionally, catalyzes the reversible interconversion of serine and glycine with tetrahydrofolate (THF) serving as the one-carbon carrier. This reaction serves as the major source of one-carbon groups required for the biosynthesis of purines, thymidylate, methionine, and other important biomolecules. Also exhibits THF-independent aldolase activity toward beta-hydroxyamino acids, producing glycine and aldehydes, via a retro-aldol mechanism. This Variovorax paradoxus (strain S110) protein is Serine hydroxymethyltransferase.